A 512-amino-acid chain; its full sequence is 2-isopropylmalate synthase (512 aa).

The region spanning 4–266 is the Pyruvate carboxyltransferase domain; that stretch reads IQFFDTTLRD…ETNIVLNQFK (263 aa). 4 residues coordinate Mn(2+): D13, H201, H203, and N237. The interval 390 to 512 is regulatory domain; sequence ELKHLQVQYV…SKQADFEEVK (123 aa).

The protein belongs to the alpha-IPM synthase/homocitrate synthase family. LeuA type 1 subfamily. Homodimer. Requires Mn(2+) as cofactor.

The protein resides in the cytoplasm. It carries out the reaction 3-methyl-2-oxobutanoate + acetyl-CoA + H2O = (2S)-2-isopropylmalate + CoA + H(+). It participates in amino-acid biosynthesis; L-leucine biosynthesis; L-leucine from 3-methyl-2-oxobutanoate: step 1/4. In terms of biological role, catalyzes the condensation of the acetyl group of acetyl-CoA with 3-methyl-2-oxobutanoate (2-ketoisovalerate) to form 3-carboxy-3-hydroxy-4-methylpentanoate (2-isopropylmalate). This Listeria monocytogenes serotype 4b (strain CLIP80459) protein is 2-isopropylmalate synthase.